A 403-amino-acid polypeptide reads, in one-letter code: NADH-quinone oxidoreductase subunit D (403 aa).

This sequence belongs to the complex I 49 kDa subunit family. In terms of assembly, NDH-1 is composed of 14 different subunits. Subunits NuoB, C, D, E, F, and G constitute the peripheral sector of the complex.

It localises to the cell membrane. It catalyses the reaction a quinone + NADH + 5 H(+)(in) = a quinol + NAD(+) + 4 H(+)(out). Its function is as follows. NDH-1 shuttles electrons from NADH, via FMN and iron-sulfur (Fe-S) centers, to quinones in the respiratory chain. The immediate electron acceptor for the enzyme in this species is believed to be a menaquinone. Couples the redox reaction to proton translocation (for every two electrons transferred, four hydrogen ions are translocated across the cytoplasmic membrane), and thus conserves the redox energy in a proton gradient. The sequence is that of NADH-quinone oxidoreductase subunit D from Amoebophilus asiaticus (strain 5a2).